A 428-amino-acid chain; its full sequence is 3-phosphoshikimate 1-carboxyvinyltransferase (428 aa).

Residues lysine 22, serine 23, and arginine 27 each coordinate 3-phosphoshikimate. Lysine 22 contacts phosphoenolpyruvate. Glycine 98 and arginine 126 together coordinate phosphoenolpyruvate. 3-phosphoshikimate is bound by residues serine 172, serine 173, glutamine 174, serine 200, aspartate 316, asparagine 339, and lysine 343. Position 174 (glutamine 174) interacts with phosphoenolpyruvate. Aspartate 316 (proton acceptor) is an active-site residue. Phosphoenolpyruvate contacts are provided by arginine 347, arginine 389, and lysine 414.

This sequence belongs to the EPSP synthase family. As to quaternary structure, monomer.

Its subcellular location is the cytoplasm. It catalyses the reaction 3-phosphoshikimate + phosphoenolpyruvate = 5-O-(1-carboxyvinyl)-3-phosphoshikimate + phosphate. The protein operates within metabolic intermediate biosynthesis; chorismate biosynthesis; chorismate from D-erythrose 4-phosphate and phosphoenolpyruvate: step 6/7. In terms of biological role, catalyzes the transfer of the enolpyruvyl moiety of phosphoenolpyruvate (PEP) to the 5-hydroxyl of shikimate-3-phosphate (S3P) to produce enolpyruvyl shikimate-3-phosphate and inorganic phosphate. This Psychromonas ingrahamii (strain DSM 17664 / CCUG 51855 / 37) protein is 3-phosphoshikimate 1-carboxyvinyltransferase.